The primary structure comprises 80 residues: Phosphoribosylformylglycinamidine synthase subunit PurS (80 aa).

It belongs to the PurS family. As to quaternary structure, homodimer. Part of the FGAM synthase complex composed of 1 PurL, 1 PurQ and 2 PurS subunits.

The protein resides in the cytoplasm. It catalyses the reaction N(2)-formyl-N(1)-(5-phospho-beta-D-ribosyl)glycinamide + L-glutamine + ATP + H2O = 2-formamido-N(1)-(5-O-phospho-beta-D-ribosyl)acetamidine + L-glutamate + ADP + phosphate + H(+). It participates in purine metabolism; IMP biosynthesis via de novo pathway; 5-amino-1-(5-phospho-D-ribosyl)imidazole from N(2)-formyl-N(1)-(5-phospho-D-ribosyl)glycinamide: step 1/2. Part of the phosphoribosylformylglycinamidine synthase complex involved in the purines biosynthetic pathway. Catalyzes the ATP-dependent conversion of formylglycinamide ribonucleotide (FGAR) and glutamine to yield formylglycinamidine ribonucleotide (FGAM) and glutamate. The FGAM synthase complex is composed of three subunits. PurQ produces an ammonia molecule by converting glutamine to glutamate. PurL transfers the ammonia molecule to FGAR to form FGAM in an ATP-dependent manner. PurS interacts with PurQ and PurL and is thought to assist in the transfer of the ammonia molecule from PurQ to PurL. The polypeptide is Phosphoribosylformylglycinamidine synthase subunit PurS (Archaeoglobus fulgidus (strain ATCC 49558 / DSM 4304 / JCM 9628 / NBRC 100126 / VC-16)).